Consider the following 156-residue polypeptide: Small ribosomal subunit protein uS7c (156 aa).

This sequence belongs to the universal ribosomal protein uS7 family. As to quaternary structure, part of the 30S ribosomal subunit.

The protein localises to the plastid. The protein resides in the chloroplast. Functionally, one of the primary rRNA binding proteins, it binds directly to 16S rRNA where it nucleates assembly of the head domain of the 30S subunit. The polypeptide is Small ribosomal subunit protein uS7c (rps7) (Stangeria eriopus (Natal grass cycad)).